A 274-amino-acid chain; its full sequence is NH(3)-dependent NAD(+) synthetase (274 aa).

46–53 (GISGGQDS) serves as a coordination point for ATP. Asp52 is a binding site for Mg(2+). A deamido-NAD(+)-binding site is contributed by Arg140. An ATP-binding site is contributed by Thr160. Glu165 provides a ligand contact to Mg(2+). Deamido-NAD(+) is bound by residues Lys173 and Asp180. ATP is bound by residues Lys189 and Thr211. Residue 260–261 (HK) participates in deamido-NAD(+) binding.

The protein belongs to the NAD synthetase family. Homodimer.

The enzyme catalyses deamido-NAD(+) + NH4(+) + ATP = AMP + diphosphate + NAD(+) + H(+). It participates in cofactor biosynthesis; NAD(+) biosynthesis; NAD(+) from deamido-NAD(+) (ammonia route): step 1/1. Its function is as follows. Catalyzes the ATP-dependent amidation of deamido-NAD to form NAD. Uses ammonia as a nitrogen source. The chain is NH(3)-dependent NAD(+) synthetase from Nocardia farcinica (strain IFM 10152).